The sequence spans 123 residues: uncharacterized protein (123 aa).

Residues 17–74 (FQKKKKTGSQTRRTLKPQPQQLQQNLPKGHETTGHTYERVLQQQGSQERSPGLMSEDS) form a disordered region. The residue at position 30 (Thr-30) is a Phosphothreonine. The span at 32 to 43 (KPQPQQLQQNLP) shows a compositional bias: low complexity. Residues 44–54 (KGHETTGHTYE) are compositionally biased toward basic and acidic residues. Residue Ser-62 is modified to Phosphoserine.

This is an uncharacterized protein from Homo sapiens (Human).